The chain runs to 371 residues: MSLENKNIIITAGGTGGHIYPALAIAELLRQNKANVTWVGTPNSMEASIVPEYFNIQFIKSSGVRRKGIIKKITFPLKLAYNTLKSRSLLKKLKADLVIGFGGYVSGPICLAAAQINIPVIIHEQNAKIGLTNRILAKFATTICLAFEIENLHKQFSSKQLAKTKIVGNPVRKDIVALNDKARIYTDSSTLKILVLGGSQGAKAINEIIPKLIQKSNEQGINIKVWHQTGKLSLEETKDAYKDISQNHIKDIAAFIDDMAIAYNWADLVICRAGALTVSECAIAGLPAIFIPLPSAVDDHQFFNVQNIVNNNAGFCLRQQQMTLENLLAIIKPLNQDRSKLEQMSKMAKKTLIKNSSEQILDCVKKILNNK.

Residues 15–17 (TGG), Asn-126, Arg-172, Ser-199, Ile-256, 275–280 (ALTVSE), and Gln-301 each bind UDP-N-acetyl-alpha-D-glucosamine.

Belongs to the glycosyltransferase 28 family. MurG subfamily.

The protein localises to the cell inner membrane. The enzyme catalyses di-trans,octa-cis-undecaprenyl diphospho-N-acetyl-alpha-D-muramoyl-L-alanyl-D-glutamyl-meso-2,6-diaminopimeloyl-D-alanyl-D-alanine + UDP-N-acetyl-alpha-D-glucosamine = di-trans,octa-cis-undecaprenyl diphospho-[N-acetyl-alpha-D-glucosaminyl-(1-&gt;4)]-N-acetyl-alpha-D-muramoyl-L-alanyl-D-glutamyl-meso-2,6-diaminopimeloyl-D-alanyl-D-alanine + UDP + H(+). The protein operates within cell wall biogenesis; peptidoglycan biosynthesis. In terms of biological role, cell wall formation. Catalyzes the transfer of a GlcNAc subunit on undecaprenyl-pyrophosphoryl-MurNAc-pentapeptide (lipid intermediate I) to form undecaprenyl-pyrophosphoryl-MurNAc-(pentapeptide)GlcNAc (lipid intermediate II). This Francisella tularensis subsp. mediasiatica (strain FSC147) protein is UDP-N-acetylglucosamine--N-acetylmuramyl-(pentapeptide) pyrophosphoryl-undecaprenol N-acetylglucosamine transferase.